Consider the following 287-residue polypeptide: MAVALRFTKMQGIGNDYVYINGFQERIDSPGELARKISDRHFGIGSDGLVLILPSATADVRMRMFNADGSESEMCGNAVRCVGKYVYDHGIQVKDVITVETRAGVKIVRLLFEAGKVCGATVDMGEPELHPARIPVLTETSGDGSQQRFVARPVDVNGQLYEITAVSMGNPHAVIFMKGIDDLDLPRIGPRFEHHPLFPKRTNTEFAEVISSTKVRMRVWERGAGETLACGTGACAVAVACVLNGYAGRDVEVELKGGSLHIHWDEASNHVYMTGGAVTVFSGEYYI.

Substrate contacts are provided by asparagine 15 and asparagine 66. The active-site Proton donor is the cysteine 75. Residues 76-77 (GN), asparagine 170, asparagine 203, and 221-222 (ER) each bind substrate. Cysteine 230 (proton acceptor) is an active-site residue. 231–232 (GT) is a substrate binding site.

It belongs to the diaminopimelate epimerase family. As to quaternary structure, homodimer.

It is found in the cytoplasm. The enzyme catalyses (2S,6S)-2,6-diaminopimelate = meso-2,6-diaminopimelate. The protein operates within amino-acid biosynthesis; L-lysine biosynthesis via DAP pathway; DL-2,6-diaminopimelate from LL-2,6-diaminopimelate: step 1/1. In terms of biological role, catalyzes the stereoinversion of LL-2,6-diaminopimelate (L,L-DAP) to meso-diaminopimelate (meso-DAP), a precursor of L-lysine and an essential component of the bacterial peptidoglycan. The protein is Diaminopimelate epimerase of Desulfovibrio desulfuricans (strain ATCC 27774 / DSM 6949 / MB).